The sequence spans 551 residues: MIRMIKGQIYFTSKYPNIIIPEKPIPHLILKHIRSKPDQVLLVDGLTFKEYSSHFVADTIEKVACGLNKLNIKKGDVLGVILPNLPEYVPIFHGTLLMGGITSLVNPDYTIEELSHTLATVSPRYLAVTLAVYEKIKNDLKRVFPSVEKVILVDIAGQTLKEIGQLTLSSDGIVMSFNQLINNNGKDYPIVRIDLKKDTAIIPFSSGTTGLFKGVCLSHHNLVSNTHQTQTVETTNYKKNDTVMGQLPFFHIYGLMTYLILMVKQGHCVVILPKFEFVRFLDLIQKYKVAISFIVPPIAIMFAKSPIVDKFDLSSLRTLFSGAAPLSREVEDLIKERFKGKLIIKQGYGATELSPACFVIPSGLIKSGSAGILLPNQLVKIISPETGENLGMGEKGEICIKGPNVMLGYYNNEKATNEVIDKDGFFKTGDIGYVDEDGYYFIVDRSKELIKCKGFQVPPAELEALLLSHPKVADACVVGLSKGDMGEVPRGFVVIKQNESLTEKELLDWAHPKIANYKHFRGGIFFIPAIPKSATGKLLRKNLKDINPPKL.

ATP is bound by residues Ser205, Ser206, Gly207, Thr208, Thr209, and Lys213. (E)-4-coumaroyl-AMP is bound by residues Tyr253 and Thr257. Lys274 is a CoA binding site. Residues 276-346 (EFVRFLDLIQ…RFKGKLIIKQ (71 aa)) are SBD1. (E)-4-coumaroyl-AMP-binding residues include Ala323, Gln346, Gly347, and Thr351. Residues Gln346, Gly347, Thr351, Asp430, and Arg445 each contribute to the ATP site. The interval 347 to 409 (GYGATELSPA…IKGPNVMLGY (63 aa)) is SBD2. 2 residues coordinate (E)-4-coumaroyl-AMP: Lys447 and Lys451. The CoA site is built by Lys453 and Gly454. Lys537 contributes to the ATP binding site.

It belongs to the ATP-dependent AMP-binding enzyme family. The cofactor is Mg(2+).

The enzyme catalyses (E)-4-coumarate + ATP + CoA = (E)-4-coumaroyl-CoA + AMP + diphosphate. It carries out the reaction (E)-4-coumarate + ATP + H(+) = (E)-4-coumaroyl-AMP + diphosphate. The catalysed reaction is (E)-4-coumaroyl-AMP + CoA = (E)-4-coumaroyl-CoA + AMP + H(+). The protein operates within phytoalexin biosynthesis; 3,4',5-trihydroxystilbene biosynthesis; 3,4',5-trihydroxystilbene from trans-4-coumarate: step 1/2. Carboxylate--CoA ligase that may use 4-coumarate as substrate. Follows a two-step reaction mechanism, wherein the carboxylate substrate first undergoes adenylation by ATP, followed by a thioesterification in the presence of CoA to yield the final CoA thioester. This chain is Probable 4-coumarate--CoA ligase 2 (4cl2), found in Dictyostelium discoideum (Social amoeba).